Consider the following 193-residue polypeptide: Segregation and condensation protein B (193 aa).

It belongs to the ScpB family. In terms of assembly, homodimer. Homodimerization may be required to stabilize the binding of ScpA to the Smc head domains. Component of a cohesin-like complex composed of ScpA, ScpB and the Smc homodimer, in which ScpA and ScpB bind to the head domain of Smc. The presence of the three proteins is required for the association of the complex with DNA.

It is found in the cytoplasm. Its function is as follows. Participates in chromosomal partition during cell division. May act via the formation of a condensin-like complex containing Smc and ScpA that pull DNA away from mid-cell into both cell halves. The protein is Segregation and condensation protein B of Clostridium botulinum (strain ATCC 19397 / Type A).